The primary structure comprises 141 residues: Hemoglobin subunit alpha-D (141 aa).

A Globin domain is found at 1–141 (MLNHDEKQLI…VSAVLAEKYR (141 aa)). Residues His-58 and His-87 each coordinate heme b.

The protein belongs to the globin family. In terms of assembly, heterotetramer of two alpha-D chains and two beta chains. In terms of tissue distribution, red blood cells.

In terms of biological role, involved in oxygen transport from the lung to the various peripheral tissues. The chain is Hemoglobin subunit alpha-D (HBAD) from Chrysemys picta bellii (Western painted turtle).